The chain runs to 321 residues: D-alanine--D-alanine ligase (321 aa).

Positions 121 to 315 (RIWFLTNNIN…FTNLIEEIIK (195 aa)) constitute an ATP-grasp domain. 147-199 (PMKRPYVIKPLTQGSSIGVEVIFAEDDFNFADYDFPYGDQVIIEQYIKGRELQ) is an ATP binding site. Residues Glu268, Glu282, and Asn284 each coordinate Mg(2+).

The protein belongs to the D-alanine--D-alanine ligase family. Mg(2+) serves as cofactor. The cofactor is Mn(2+).

It localises to the cytoplasm. The enzyme catalyses 2 D-alanine + ATP = D-alanyl-D-alanine + ADP + phosphate + H(+). It functions in the pathway cell wall biogenesis; peptidoglycan biosynthesis. Its function is as follows. Cell wall formation. The protein is D-alanine--D-alanine ligase of Rickettsia africae (strain ESF-5).